The primary structure comprises 524 residues: Putative cysteine ligase BshC (524 aa).

The stretch at 437–457 forms a coiled coil; that stretch reads AQALDRSARKINYQIEKMERK.

This sequence belongs to the BshC family.

The chain is Putative cysteine ligase BshC from Solibacter usitatus (strain Ellin6076).